A 349-amino-acid polypeptide reads, in one-letter code: Glycerol-1-phosphate dehydrogenase [NAD(P)+] (349 aa).

NAD(+) contacts are provided by residues 95-99 (GKSID) and 117-120 (TSPS). Asp-122 is a binding site for substrate. An NAD(+)-binding site is contributed by Ser-126. Asp-169 serves as a coordination point for substrate. Residues Asp-169 and His-249 each contribute to the Zn(2+) site. His-253 is a binding site for substrate. His-265 lines the Zn(2+) pocket.

This sequence belongs to the glycerol-1-phosphate dehydrogenase family. Homodimer. Zn(2+) is required as a cofactor.

It localises to the cytoplasm. It carries out the reaction sn-glycerol 1-phosphate + NAD(+) = dihydroxyacetone phosphate + NADH + H(+). The catalysed reaction is sn-glycerol 1-phosphate + NADP(+) = dihydroxyacetone phosphate + NADPH + H(+). Its pathway is membrane lipid metabolism; glycerophospholipid metabolism. In terms of biological role, catalyzes the NAD(P)H-dependent reduction of dihydroxyacetonephosphate (DHAP or glycerone phosphate) to glycerol 1-phosphate (G1P). The G1P thus generated is used as the glycerophosphate backbone of phospholipids in the cellular membranes of Archaea. The protein is Glycerol-1-phosphate dehydrogenase [NAD(P)+] of Hyperthermus butylicus (strain DSM 5456 / JCM 9403 / PLM1-5).